The chain runs to 84 residues: Exodeoxyribonuclease 7 small subunit (84 aa).

This sequence belongs to the XseB family. In terms of assembly, heterooligomer composed of large and small subunits.

The protein resides in the cytoplasm. The enzyme catalyses Exonucleolytic cleavage in either 5'- to 3'- or 3'- to 5'-direction to yield nucleoside 5'-phosphates.. Its function is as follows. Bidirectionally degrades single-stranded DNA into large acid-insoluble oligonucleotides, which are then degraded further into small acid-soluble oligonucleotides. The chain is Exodeoxyribonuclease 7 small subunit from Janthinobacterium sp. (strain Marseille) (Minibacterium massiliensis).